Here is a 553-residue protein sequence, read N- to C-terminus: LIM domain-containing protein B (553 aa).

Positions 43–115 (LTYKDPNVST…SINNNISNNN (73 aa)) are disordered. Positions 99–114 (GPGLPNNSINNNISNN) are enriched in low complexity. LIM zinc-binding domains lie at 205 to 262 (PICG…ELFS), 263 to 322 (PRCF…RQKR), 328 to 387 (EICS…KQIL), 388 to 447 (NICG…FFGR), and 448 to 505 (QCFK…LPKE). The segment at 534–553 (ELKKERERAAKEKEKESKAK) is disordered.

The protein localises to the cytoplasm. It localises to the cell cortex. The protein resides in the cytoskeleton. In terms of biological role, regulates and controls rearrangements of the actin cytoskeleton. Required for tip formation, morphogenesis, cell adhesion and motility, chemotaxis and aggregates formation. May function downstream of paxB. In Dictyostelium discoideum (Social amoeba), this protein is LIM domain-containing protein B (limB).